The sequence spans 855 residues: Alanine--tRNA ligase (855 aa).

Zn(2+)-binding residues include H555, H559, C657, and H661.

It belongs to the class-II aminoacyl-tRNA synthetase family. Requires Zn(2+) as cofactor.

It localises to the cytoplasm. The catalysed reaction is tRNA(Ala) + L-alanine + ATP = L-alanyl-tRNA(Ala) + AMP + diphosphate. Its function is as follows. Catalyzes the attachment of alanine to tRNA(Ala) in a two-step reaction: alanine is first activated by ATP to form Ala-AMP and then transferred to the acceptor end of tRNA(Ala). Also edits incorrectly charged Ser-tRNA(Ala) and Gly-tRNA(Ala) via its editing domain. This Wolinella succinogenes (strain ATCC 29543 / DSM 1740 / CCUG 13145 / JCM 31913 / LMG 7466 / NCTC 11488 / FDC 602W) (Vibrio succinogenes) protein is Alanine--tRNA ligase.